The following is a 358-amino-acid chain: Probable branched-chain-amino-acid aminotransferase (358 aa).

Position 196 is an N6-(pyridoxal phosphate)lysine (lysine 196).

The protein belongs to the class-IV pyridoxal-phosphate-dependent aminotransferase family. Requires pyridoxal 5'-phosphate as cofactor.

It carries out the reaction L-leucine + 2-oxoglutarate = 4-methyl-2-oxopentanoate + L-glutamate. The catalysed reaction is L-isoleucine + 2-oxoglutarate = (S)-3-methyl-2-oxopentanoate + L-glutamate. The enzyme catalyses L-valine + 2-oxoglutarate = 3-methyl-2-oxobutanoate + L-glutamate. It participates in amino-acid biosynthesis; L-isoleucine biosynthesis; L-isoleucine from 2-oxobutanoate: step 4/4. Its pathway is amino-acid biosynthesis; L-leucine biosynthesis; L-leucine from 3-methyl-2-oxobutanoate: step 4/4. It functions in the pathway amino-acid biosynthesis; L-valine biosynthesis; L-valine from pyruvate: step 4/4. In terms of biological role, acts on leucine, isoleucine and valine. This chain is Probable branched-chain-amino-acid aminotransferase (ilvE), found in Staphylococcus aureus (strain N315).